Here is a 475-residue protein sequence, read N- to C-terminus: Ataxin-10 (475 aa).

The residue at position 10 (Arg-10) is an Omega-N-methylarginine. Phosphoserine is present on residues Ser-12 and Ser-77. Thr-82 is modified (phosphothreonine). Phosphoserine is present on Ser-430.

This sequence belongs to the ataxin-10 family. In terms of assembly, homooligomer. Interacts with GNB2. Interacts with IQCB1. Interacts with OGT. Interacts with PLK1. Polyubiquitinated. Post-translationally, phosphorylation at Ser-12 by AURKB promotes the association of ATXN10 with PLK1. Phosphorylation at Ser-77 and Thr-82 by PLK1 may play a role in the regulation of cytokinesis and may stimulate the proteasome-mediated degradation of ATXN10. In high cell density areas; cerebellar cortex, dentate gyrus, hippocampus, anterior olfactory nucleus, primary olfactory cortex.

It localises to the cytoplasm. It is found in the perinuclear region. Its subcellular location is the midbody. The protein localises to the cytoskeleton. The protein resides in the cilium basal body. It localises to the microtubule organizing center. It is found in the centrosome. Its subcellular location is the centriole. In terms of biological role, may play a role in the regulation of cytokinesis. May play a role in signaling by stimulating protein glycosylation. Induces neuritogenesis by activating the Ras-MAP kinase pathway and is necessary for the survival of cerebellar neurons. Does not appear to play a major role in ciliogenesis. The sequence is that of Ataxin-10 (Atxn10) from Mus musculus (Mouse).